The sequence spans 718 residues: DNA ligase (718 aa).

NAD(+) contacts are provided by residues Asp-34 to Asp-38, Ser-83 to Leu-84, and Glu-115. Lys-117 acts as the N6-AMP-lysine intermediate in catalysis. Arg-138, Glu-186, Lys-302, and Lys-326 together coordinate NAD(+). Positions 420, 423, 438, and 444 each coordinate Zn(2+). The region spanning Pro-604–Asn-694 is the BRCT domain.

The protein belongs to the NAD-dependent DNA ligase family. LigA subfamily. Requires Mg(2+) as cofactor. The cofactor is Mn(2+).

The enzyme catalyses NAD(+) + (deoxyribonucleotide)n-3'-hydroxyl + 5'-phospho-(deoxyribonucleotide)m = (deoxyribonucleotide)n+m + AMP + beta-nicotinamide D-nucleotide.. Functionally, DNA ligase that catalyzes the formation of phosphodiester linkages between 5'-phosphoryl and 3'-hydroxyl groups in double-stranded DNA using NAD as a coenzyme and as the energy source for the reaction. It is essential for DNA replication and repair of damaged DNA. In Roseiflexus castenholzii (strain DSM 13941 / HLO8), this protein is DNA ligase.